The chain runs to 317 residues: Transaldolase (317 aa).

Lys-126 acts as the Schiff-base intermediate with substrate in catalysis.

This sequence belongs to the transaldolase family. Type 1 subfamily. In terms of assembly, homodimer.

Its subcellular location is the cytoplasm. It catalyses the reaction D-sedoheptulose 7-phosphate + D-glyceraldehyde 3-phosphate = D-erythrose 4-phosphate + beta-D-fructose 6-phosphate. It functions in the pathway carbohydrate degradation; pentose phosphate pathway; D-glyceraldehyde 3-phosphate and beta-D-fructose 6-phosphate from D-ribose 5-phosphate and D-xylulose 5-phosphate (non-oxidative stage): step 2/3. Its function is as follows. Transaldolase is important for the balance of metabolites in the pentose-phosphate pathway. The protein is Transaldolase of Paraburkholderia xenovorans (strain LB400).